We begin with the raw amino-acid sequence, 311 residues long: Probable acetylxylan esterase A (311 aa).

The first 19 residues, 1–19 (MAPFSFILTVLLYALTCSA), serve as a signal peptide directing secretion. Catalysis depends on Ser153, which acts as the Charge relay system. 2 N-linked (GlcNAc...) asparagine glycosylation sites follow: Asn197 and Asn224.

It belongs to the carbohydrate esterase 1 (CE1) family. AxeA subfamily. As to quaternary structure, monomer.

The protein localises to the secreted. It catalyses the reaction Deacetylation of xylans and xylo-oligosaccharides.. The protein operates within glycan degradation; xylan degradation. Its function is as follows. Acetylxylan esterase involved in the hydrolysis of xylan, a major structural heterogeneous polysaccharide found in plant biomass representing the second most abundant polysaccharide in the biosphere, after cellulose. Degrades acetylated xylans by cleaving acetyl side groups from the hetero-xylan backbone. The protein is Probable acetylxylan esterase A (axeA) of Aspergillus terreus (strain NIH 2624 / FGSC A1156).